We begin with the raw amino-acid sequence, 138 residues long: Ribosome-binding factor A (138 aa).

The protein belongs to the RbfA family. Monomer. Binds 30S ribosomal subunits, but not 50S ribosomal subunits or 70S ribosomes.

The protein resides in the cytoplasm. In terms of biological role, one of several proteins that assist in the late maturation steps of the functional core of the 30S ribosomal subunit. Associates with free 30S ribosomal subunits (but not with 30S subunits that are part of 70S ribosomes or polysomes). Required for efficient processing of 16S rRNA. May interact with the 5'-terminal helix region of 16S rRNA. The polypeptide is Ribosome-binding factor A (Bradyrhizobium sp. (strain ORS 278)).